Here is a 290-residue protein sequence, read N- to C-terminus: Probable endonuclease 4 (290 aa).

H69, H109, E145, D179, H182, H216, D229, H231, and E261 together coordinate Zn(2+).

Belongs to the AP endonuclease 2 family. The cofactor is Zn(2+).

The catalysed reaction is Endonucleolytic cleavage to 5'-phosphooligonucleotide end-products.. Functionally, endonuclease IV plays a role in DNA repair. It cleaves phosphodiester bonds at apurinic or apyrimidinic (AP) sites, generating a 3'-hydroxyl group and a 5'-terminal sugar phosphate. This is Probable endonuclease 4 from Chlorobium limicola (strain DSM 245 / NBRC 103803 / 6330).